A 416-amino-acid chain; its full sequence is Glutamyl-tRNA reductase (416 aa).

Substrate contacts are provided by residues 49-52 (TCNR), Ser105, 110-112 (EPQ), and Gln116. Residue Cys50 is the Nucleophile of the active site. 185–190 (GAGETI) lines the NADP(+) pocket.

This sequence belongs to the glutamyl-tRNA reductase family. In terms of assembly, homodimer.

The catalysed reaction is (S)-4-amino-5-oxopentanoate + tRNA(Glu) + NADP(+) = L-glutamyl-tRNA(Glu) + NADPH + H(+). It functions in the pathway porphyrin-containing compound metabolism; protoporphyrin-IX biosynthesis; 5-aminolevulinate from L-glutamyl-tRNA(Glu): step 1/2. Catalyzes the NADPH-dependent reduction of glutamyl-tRNA(Glu) to glutamate 1-semialdehyde (GSA). This Shewanella sp. (strain MR-7) protein is Glutamyl-tRNA reductase.